A 126-amino-acid polypeptide reads, in one-letter code: Protein ApaG (126 aa).

An ApaG domain is found at 2-126; sequence SDSRYKVDVS…FRLAVPGSLH (125 aa).

The chain is Protein ApaG from Pseudomonas syringae pv. tomato (strain ATCC BAA-871 / DC3000).